Consider the following 86-residue polypeptide: Putative defensin-like protein 189 (86 aa).

A signal peptide spans 1 to 28 (MKMAKSANEIGFITCLVVFLVLTGQSNG). 4 disulfides stabilise this stretch: Cys-39/Cys-85, Cys-52/Cys-71, Cys-57/Cys-80, and Cys-61/Cys-82.

This sequence belongs to the DEFL family.

The protein localises to the secreted. The protein is Putative defensin-like protein 189 of Arabidopsis thaliana (Mouse-ear cress).